We begin with the raw amino-acid sequence, 576 residues long: 3-hydroxy-3-methylglutaryl coenzyme A reductase 1 (576 aa).

The disordered stretch occupies residues 1–35 (MDSRRRPSKPLLTSSGEVLHRKQASPVTDEDQIHR). A run of 2 helical transmembrane segments spans residues 42–62 (ALPL…FSVA) and 89–109 (AIVS…IDFV). E255 serves as the catalytic Charge relay system. The N-linked (GlcNAc...) asparagine glycan is linked to N319. Active-site charge relay system residues include K387 and D463. The helical transmembrane segment at 532 to 552 (LLATIVAGSVLAGELSLMSAI) threads the bilayer. H561 acts as the Proton donor in catalysis. Residue N565 is glycosylated (N-linked (GlcNAc...) asparagine).

The protein belongs to the HMG-CoA reductase family. In terms of tissue distribution, expressed in trichomes, leaves, flowers, roots and stems.

It is found in the endoplasmic reticulum membrane. The protein localises to the plastid. It localises to the chloroplast membrane. Its subcellular location is the peroxisome membrane. It carries out the reaction (R)-mevalonate + 2 NADP(+) + CoA = (3S)-3-hydroxy-3-methylglutaryl-CoA + 2 NADPH + 2 H(+). Its pathway is metabolic intermediate biosynthesis; (R)-mevalonate biosynthesis; (R)-mevalonate from acetyl-CoA: step 3/3. In terms of biological role, catalyzes the synthesis of mevalonate, the specific precursor of all isoprenoid compounds present in plants. Component of the triterpene saponins (e.g. ginsenosides or panaxosides) and phytosterols biosynthetic pathways. Promotes triterpenes accumulation in roots. This is 3-hydroxy-3-methylglutaryl coenzyme A reductase 1 from Cannabis sativa (Hemp).